Consider the following 239-residue polypeptide: Putative CCR4-associated factor 1 homolog 8 (239 aa).

Asp-17, Glu-19, Asp-133, and Asn-204 together coordinate a divalent metal cation.

The protein belongs to the CAF1 family. In terms of assembly, component of the CCR4-NOT complex, at least composed of CRR4 and CAF1 proteins. A divalent metal cation serves as cofactor.

The protein resides in the nucleus. It localises to the cytoplasm. The enzyme catalyses Exonucleolytic cleavage of poly(A) to 5'-AMP.. Its function is as follows. Ubiquitous transcription factor required for a diverse set of processes. It is a component of the CCR4 complex involved in the control of gene expression. This is Putative CCR4-associated factor 1 homolog 8 (CAF1-8) from Arabidopsis thaliana (Mouse-ear cress).